The sequence spans 584 residues: A-type ATP synthase subunit A (584 aa).

Position 233-240 (233-240 (GPFGSGKT)) interacts with ATP.

Belongs to the ATPase alpha/beta chains family. Has multiple subunits with at least A(3), B(3), C, D, E, F, H, I and proteolipid K(x).

The protein resides in the cell membrane. The enzyme catalyses ATP + H2O + 4 H(+)(in) = ADP + phosphate + 5 H(+)(out). In terms of biological role, component of the A-type ATP synthase that produces ATP from ADP in the presence of a proton gradient across the membrane. The A chain is the catalytic subunit. The protein is A-type ATP synthase subunit A of Methanobrevibacter smithii (strain ATCC 35061 / DSM 861 / OCM 144 / PS).